A 517-amino-acid polypeptide reads, in one-letter code: GMP synthase [glutamine-hydrolyzing] (517 aa).

The Glutamine amidotransferase type-1 domain maps to 11–202; it reads KIIVLDYGSQ…AFDVCHAEAN (192 aa). The active-site Nucleophile is the C88. Catalysis depends on residues H176 and E178. Residues 203 to 392 form the GMPS ATP-PPase domain; the sequence is WSMDDFITKQ…LGMPHSLVWR (190 aa). 230–236 contacts ATP; it reads SGGVDSS.

In terms of assembly, homodimer.

The catalysed reaction is XMP + L-glutamine + ATP + H2O = GMP + L-glutamate + AMP + diphosphate + 2 H(+). It participates in purine metabolism; GMP biosynthesis; GMP from XMP (L-Gln route): step 1/1. In terms of biological role, catalyzes the synthesis of GMP from XMP. The chain is GMP synthase [glutamine-hydrolyzing] (guaA) from Lacticaseibacillus rhamnosus (Lactobacillus rhamnosus).